Reading from the N-terminus, the 121-residue chain is MDFIKIVNEEFKSGKEHPKFNSGDTITVEYRIKEGNKERIQKYRGVVIRISGHGDKKRFTVRKISDGIGVERIFPIESPFIENITVEKYGKVRRAKLYYLRGLTGKKARIKERRVALSSKD.

It belongs to the bacterial ribosomal protein bL19 family.

Its function is as follows. This protein is located at the 30S-50S ribosomal subunit interface and may play a role in the structure and function of the aminoacyl-tRNA binding site. This Porphyromonas gingivalis (strain ATCC BAA-308 / W83) protein is Large ribosomal subunit protein bL19.